The sequence spans 556 residues: 2-succinyl-5-enolpyruvyl-6-hydroxy-3-cyclohexene-1-carboxylate synthase (556 aa).

The protein belongs to the TPP enzyme family. MenD subfamily. Homodimer. It depends on Mg(2+) as a cofactor. Mn(2+) serves as cofactor. The cofactor is thiamine diphosphate.

The enzyme catalyses isochorismate + 2-oxoglutarate + H(+) = 5-enolpyruvoyl-6-hydroxy-2-succinyl-cyclohex-3-ene-1-carboxylate + CO2. It functions in the pathway quinol/quinone metabolism; 1,4-dihydroxy-2-naphthoate biosynthesis; 1,4-dihydroxy-2-naphthoate from chorismate: step 2/7. Its pathway is quinol/quinone metabolism; menaquinone biosynthesis. In terms of biological role, catalyzes the thiamine diphosphate-dependent decarboxylation of 2-oxoglutarate and the subsequent addition of the resulting succinic semialdehyde-thiamine pyrophosphate anion to isochorismate to yield 2-succinyl-5-enolpyruvyl-6-hydroxy-3-cyclohexene-1-carboxylate (SEPHCHC). This Escherichia coli (strain UTI89 / UPEC) protein is 2-succinyl-5-enolpyruvyl-6-hydroxy-3-cyclohexene-1-carboxylate synthase.